Reading from the N-terminus, the 275-residue chain is Putative replication protein (275 aa).

Residues 98 to 198 (SKAICFTPYD…RILKISEDYF (101 aa)) form the BRCT domain.

This chain is Putative replication protein, found in Wigglesworthia glossinidia brevipalpis.